The primary structure comprises 184 residues: Large ribosomal subunit protein uL6 (184 aa).

It belongs to the universal ribosomal protein uL6 family. In terms of assembly, part of the 50S ribosomal subunit.

In terms of biological role, this protein binds to the 23S rRNA, and is important in its secondary structure. It is located near the subunit interface in the base of the L7/L12 stalk, and near the tRNA binding site of the peptidyltransferase center. The chain is Large ribosomal subunit protein uL6 from Thermomicrobium roseum (strain ATCC 27502 / DSM 5159 / P-2).